A 316-amino-acid polypeptide reads, in one-letter code: Protein U25 (316 aa).

This sequence belongs to the herpesviridae US22 family.

This chain is Protein U25 (U25), found in Homo sapiens (Human).